Reading from the N-terminus, the 443-residue chain is MEYDDKLVRFRQGHLNPFDKKGGAERHPADSETQPCKDSSTSSPLSVPEYNYPDRVMDLGVSEDHFSRPVGLFLASDVQQLRQAIEECKQEILELPENSDRQKDAVVRLIHLRLKLQELNDPLEDEPNLRVLLEHRFYKEKSKSVKHLCDKCSTFIWGLIQTWYTCTGCSYSCHSKCLNLITKPCVRSKVSHQAEYELSICPEAGLDSQDYRCAECRTPISLRAVPSEARQCDYTGQYYCISCHWNDLAVIPARAIHNWDFEPCKVSRYSMRYLALMLGRPVLKLREINPLLFNYVEELVEIRKLRQDILLMKPYFITCKEAMEDRLLLQLQDRQHFVENDDMYSLQDLLDISSGRLGCSLTEIHTTFAKHIKLDCERCQAKGFMCELCKEGDILFPFDSHTSVCQDCAAVFHRDCYYENSTSCPRCMRLNLRKQVQNPGAEP.

The segment at 14-49 is disordered; sequence HLNPFDKKGGAERHPADSETQPCKDSSTSSPLSVPE. A compositionally biased stretch (basic and acidic residues) spans 17 to 30; that stretch reads PFDKKGGAERHPAD. Residues 31-45 show a composition bias toward polar residues; that stretch reads SETQPCKDSSTSSPL. Phorbol-ester/DAG-type zinc fingers lie at residues 134–185 and 364–424; these read EHRF…TKPC and IHTT…STSC.

The protein belongs to the DEF8 family.

In terms of biological role, positively regulates lysosome peripheral distribution and ruffled border formation in osteoclasts. Involved in bone resorption. The chain is Differentially expressed in FDCP 8 homolog B (def8-b) from Xenopus laevis (African clawed frog).